The sequence spans 318 residues: C1GALT1-specific chaperone 1 (318 aa).

Residues 1–6 (MLSESS) lie on the Cytoplasmic side of the membrane. A helical; Signal-anchor for type II membrane protein membrane pass occupies residues 7–26 (SFLKGVMLGSIFCALITMLG). At 27–318 (HIRIGHGNRM…FLPPNGSDND (292 aa)) the chain is on the lumenal side.

This sequence belongs to the glycosyltransferase 31 family. Beta3-Gal-T subfamily. Associates with core 1 beta-3-galactosyltransferase (C1GALT1), probably not with the soluble active form. In terms of tissue distribution, ubiquitously expressed. Abundantly expressed in salivary gland, stomach, small intestine, kidney, and testis and at intermediate levels in whole brain, cerebellum, spinal cord, thymus, spleen, trachea, lung, pancreas, ovary, and uterus.

It is found in the membrane. In terms of biological role, probable chaperone required for the generation of 1 O-glycan Gal-beta1-3GalNAc-alpha1-Ser/Thr (T antigen), which is a precursor for many extended O-glycans in glycoproteins. Probably acts as a specific molecular chaperone assisting the folding/stability of core 1 beta-3-galactosyltransferase (C1GALT1). The chain is C1GALT1-specific chaperone 1 (C1GALT1C1) from Homo sapiens (Human).